A 232-amino-acid chain; its full sequence is 7-cyano-7-deazaguanine synthase (232 aa).

ATP is bound at residue 8-18 (FSGGQDSTTCL). Zn(2+) is bound by residues Cys-188, Cys-197, Cys-200, and Cys-203.

Belongs to the QueC family. Zn(2+) serves as cofactor.

The catalysed reaction is 7-carboxy-7-deazaguanine + NH4(+) + ATP = 7-cyano-7-deazaguanine + ADP + phosphate + H2O + H(+). The protein operates within purine metabolism; 7-cyano-7-deazaguanine biosynthesis. Its function is as follows. Catalyzes the ATP-dependent conversion of 7-carboxy-7-deazaguanine (CDG) to 7-cyano-7-deazaguanine (preQ(0)). This chain is 7-cyano-7-deazaguanine synthase, found in Buchnera aphidicola subsp. Schizaphis graminum (strain Sg).